A 92-amino-acid chain; its full sequence is Alpha-conotoxin-like Mi20.1 (92 aa).

A signal peptide spans 1–24 (MPKLEMMLLVLLILPLSSFSAAGE). Residues 25–45 (QVVQGDRRSDGLARYLQRGGR) constitute a propeptide that is removed on maturation. E49 is modified (4-carboxyglutamate). Residue P55 is modified to 4-hydroxyproline. 4 cysteine pairs are disulfide-bonded: C63/C72, C68/C80, C73/C90, and C78/C92.

The protein belongs to the conotoxin D superfamily. As to quaternary structure, hetero-, homo- or pseudo-homodimer (identical sequence, different post-translational modifications). One pseudo-homodimer of [carboxyGlu-49, hydroxyPro-55]Ml20.1 and [carboxyGlu-49, hydroxyPro-55, hydroxyPro-70]Ml20.1 may exist. As to expression, expressed by the venom duct.

The protein resides in the secreted. In terms of biological role, alpha-conotoxins act on postsynaptic membranes, they bind to the nicotinic acetylcholine receptors (nAChR) and thus inhibit them. Through its two C-terminal domains, this homodimeric protein would bind to two nAChR allosteric sites, located outside the nAChR C-loop of the principal binding face and at the adjacent binding interface in a clockwise direction. This toxin specifically blocks mammalian neuronal nAChR of the alpha-7/CHRNA7, alpha-3-beta-2/CHRNA3-CHRNB2 and alpha-4-beta-2/CHRNA4-CHRNB2 subtypes. In Conus miles (Soldier cone), this protein is Alpha-conotoxin-like Mi20.1.